The sequence spans 186 residues: Putative CTD phosphatase-like protein 355R (186 aa).

Residues 2-182 (ENNKKKLILL…TELLKVQKTL (181 aa)) enclose the FCP1 homology domain.

This sequence belongs to the IIV-6 355R family.

In terms of biological role, may function as a phosphatase. This is Putative CTD phosphatase-like protein 355R from Aedes vexans (Inland floodwater mosquito).